The primary structure comprises 301 residues: Lipoyl synthase (301 aa).

7 residues coordinate [4Fe-4S] cluster: cysteine 37, cysteine 42, cysteine 48, cysteine 63, cysteine 67, cysteine 70, and serine 276. One can recognise a Radical SAM core domain in the interval 49–265 (WSKKHATVMI…ERIARTKGFL (217 aa)).

It belongs to the radical SAM superfamily. Lipoyl synthase family. [4Fe-4S] cluster is required as a cofactor.

It localises to the cytoplasm. It carries out the reaction [[Fe-S] cluster scaffold protein carrying a second [4Fe-4S](2+) cluster] + N(6)-octanoyl-L-lysyl-[protein] + 2 oxidized [2Fe-2S]-[ferredoxin] + 2 S-adenosyl-L-methionine + 4 H(+) = [[Fe-S] cluster scaffold protein] + N(6)-[(R)-dihydrolipoyl]-L-lysyl-[protein] + 4 Fe(3+) + 2 hydrogen sulfide + 2 5'-deoxyadenosine + 2 L-methionine + 2 reduced [2Fe-2S]-[ferredoxin]. The protein operates within protein modification; protein lipoylation via endogenous pathway; protein N(6)-(lipoyl)lysine from octanoyl-[acyl-carrier-protein]: step 2/2. Its function is as follows. Catalyzes the radical-mediated insertion of two sulfur atoms into the C-6 and C-8 positions of the octanoyl moiety bound to the lipoyl domains of lipoate-dependent enzymes, thereby converting the octanoylated domains into lipoylated derivatives. This Rickettsia felis (strain ATCC VR-1525 / URRWXCal2) (Rickettsia azadi) protein is Lipoyl synthase.